The primary structure comprises 89 residues: MVVIRLARGGAKKRPFYQVVVADQRRARDGRYIENIGFFNPLAKDSEEAVRLNMEAYNAWVAKGAQPSDRVASLAKAYNKSAAQTEATA.

The protein belongs to the bacterial ribosomal protein bS16 family.

The protein is Small ribosomal subunit protein bS16 of Psychrobacter arcticus (strain DSM 17307 / VKM B-2377 / 273-4).